We begin with the raw amino-acid sequence, 339 residues long: Serine/threonine-protein kinase SRK2J (339 aa).

The region spanning 4–260 is the Protein kinase domain; that stretch reads YEMVKDLGFG…LKEIKSHAWF (257 aa). ATP is bound by residues 10-18 and K33; that span reads LGFGNFGLA. D123 serves as the catalytic Proton acceptor. The segment at 308–339 is disordered; it reads SRPVESLGSDKKDDDEEEYLDANDEEWYDDYA. Acidic residues predominate over residues 320–339; the sequence is DDDEEEYLDANDEEWYDDYA.

Belongs to the protein kinase superfamily. Ser/Thr protein kinase family. Expressed in seedlings.

The catalysed reaction is L-seryl-[protein] + ATP = O-phospho-L-seryl-[protein] + ADP + H(+). It catalyses the reaction L-threonyl-[protein] + ATP = O-phospho-L-threonyl-[protein] + ADP + H(+). The polypeptide is Serine/threonine-protein kinase SRK2J (SRK2J) (Arabidopsis thaliana (Mouse-ear cress)).